Consider the following 467-residue polypeptide: Ribulose bisphosphate carboxylase large chain (467 aa).

Residue K5 is modified to N6,N6,N6-trimethyllysine. Residues N114 and T164 each contribute to the substrate site. K166 acts as the Proton acceptor in catalysis. Position 168 (K168) interacts with substrate. Positions 192, 194, and 195 each coordinate Mg(2+). At K192 the chain carries N6-carboxylysine. The active-site Proton acceptor is H285. Residues R286, H318, and S370 each coordinate substrate.

Belongs to the RuBisCO large chain family. Type I subfamily. As to quaternary structure, heterohexadecamer of 8 large chains and 8 small chains; disulfide-linked. The disulfide link is formed within the large subunit homodimers. Requires Mg(2+) as cofactor. Post-translationally, the disulfide bond which can form in the large chain dimeric partners within the hexadecamer appears to be associated with oxidative stress and protein turnover.

It localises to the plastid. The protein localises to the chloroplast. It carries out the reaction 2 (2R)-3-phosphoglycerate + 2 H(+) = D-ribulose 1,5-bisphosphate + CO2 + H2O. The enzyme catalyses D-ribulose 1,5-bisphosphate + O2 = 2-phosphoglycolate + (2R)-3-phosphoglycerate + 2 H(+). Its function is as follows. RuBisCO catalyzes two reactions: the carboxylation of D-ribulose 1,5-bisphosphate, the primary event in carbon dioxide fixation, as well as the oxidative fragmentation of the pentose substrate in the photorespiration process. Both reactions occur simultaneously and in competition at the same active site. This is Ribulose bisphosphate carboxylase large chain from Jasminum simplicifolium subsp. suavissimum (Native jasmine).